The following is a 527-amino-acid chain: MGKNWLTCVSVACLSPGKDKKNQKPEKPKRKWSFGKQKSRESFDFPLEETPPVDPSPSSVHRPYPPPPPLPDFAPQPLLPPPSPPPPPPAYTINTRIYGESKESKNRQALALASAVAAEAAVVAAHAAAEVIRLTTPSTPQIEESKEETAAIKIQNAYRCYTARRTLRALRGMARLKSLLQGKYVKRQMNAMLSSMQTLTRLQTQIQERRNRLSAENKTRHRLIQQKGHQKENHQNLVTAGNFDSSNKSKEQIVARSVNRKEASVRRERALAYAYSHQQTWRNSSKLPHQTLMDTNTTDWGWSWLERWMASRPWDAESIDDQVSVKSSLKRENSIKSSPARSKTQKSASQSSIQWPVNNDTKSRKIEVTNRRHSIGGGSSENAKDDESVGSSSSRRNSLDNTQTVKSKVSVETTSNVSNAQTVKPKANVGAKRNLDNTKTLKSKSSVGTTGNLANTEAVKSKVNVGTTSMPKKEVVADKKKPPQMVLPKKRLSSSTSLGKTKKLSDSDKATTGVANGEKKRRNGGSS.

Residues 13–90 (CLSPGKDKKN…PPSPPPPPPA (78 aa)) are disordered. Positions 17 to 26 (GKDKKNQKPE) are enriched in basic and acidic residues. Residues 63-90 (PYPPPPPLPDFAPQPLLPPPSPPPPPPA) show a composition bias toward pro residues. The region spanning 147–175 (EETAAIKIQNAYRCYTARRTLRALRGMAR) is the IQ domain. The calmodulin-binding stretch occupies residues 256 to 273 (RSVNRKEASVRRERALAY). The disordered stretch occupies residues 323–527 (VSVKSSLKRE…EKKRRNGGSS (205 aa)). Polar residues predominate over residues 335–360 (IKSSPARSKTQKSASQSSIQWPVNND). Residues 361 to 370 (TKSRKIEVTN) show a composition bias toward basic and acidic residues. 2 stretches are compositionally biased toward polar residues: residues 399–422 (LDNTQTVKSKVSVETTSNVSNAQT) and 437–455 (NTKTLKSKSSVGTTGNLAN). Residues 471–481 (PKKEVVADKKK) are compositionally biased toward basic and acidic residues. Positions 478–485 (DKKKPPQM) match the Nuclear localization signal motif.

The protein belongs to the IQD family. As to quaternary structure, binds to multiple calmodulin (CaM) in the presence of Ca(2+) and CaM-like proteins.

The protein resides in the nucleus. It is found in the nucleolus. Its function is as follows. May be involved in cooperative interactions with calmodulins or calmodulin-like proteins. Recruits calmodulin proteins to microtubules, thus being a potential scaffold in cellular signaling and trafficking. May associate with nucleic acids and regulate gene expression at the transcriptional or post-transcriptional level. The chain is Protein IQ-DOMAIN 4 from Arabidopsis thaliana (Mouse-ear cress).